The primary structure comprises 450 residues: Phosphoglucosamine mutase (450 aa).

Catalysis depends on S101, which acts as the Phosphoserine intermediate. Mg(2+) contacts are provided by S101, D240, D242, and D244. Residue S101 is modified to Phosphoserine.

Belongs to the phosphohexose mutase family. The cofactor is Mg(2+). Post-translationally, activated by phosphorylation.

The catalysed reaction is alpha-D-glucosamine 1-phosphate = D-glucosamine 6-phosphate. In terms of biological role, catalyzes the conversion of glucosamine-6-phosphate to glucosamine-1-phosphate. This is Phosphoglucosamine mutase from Streptococcus pneumoniae (strain Hungary19A-6).